The following is a 240-amino-acid chain: Uridylate kinase (240 aa).

13-16 (KASG) contacts ATP. An involved in allosteric activation by GTP region spans residues 21–26 (GSQGFG). Gly55 is a binding site for UMP. ATP-binding residues include Gly56 and Arg60. UMP is bound by residues Asp75 and 136–143 (TGNPFFTT). Residues Thr163, Gln164, Tyr169, and Asp172 each coordinate ATP.

The protein belongs to the UMP kinase family. Homohexamer.

It is found in the cytoplasm. The enzyme catalyses UMP + ATP = UDP + ADP. It functions in the pathway pyrimidine metabolism; CTP biosynthesis via de novo pathway; UDP from UMP (UMPK route): step 1/1. Its activity is regulated as follows. Allosterically activated by GTP. Inhibited by UTP. Catalyzes the reversible phosphorylation of UMP to UDP. The sequence is that of Uridylate kinase from Brucella melitensis biotype 1 (strain ATCC 23456 / CCUG 17765 / NCTC 10094 / 16M).